The following is a 350-amino-acid chain: Eukaryotic translation initiation factor 3 subunit I (350 aa).

6 WD repeats span residues 8 to 49 (GHER…GTLE), 51 to 89 (HQGV…CVYT), 91 to 135 (NSPS…ASLT), 149 to 190 (QNGS…KSLQ), 198 to 240 (EKNV…KVYK), and 296 to 335 (GHFG…KDFL).

It belongs to the eIF-3 subunit I family. Component of the eukaryotic translation initiation factor 3 (eIF-3) complex.

It localises to the cytoplasm. In terms of biological role, component of the eukaryotic translation initiation factor 3 (eIF-3) complex, which is involved in protein synthesis of a specialized repertoire of mRNAs and, together with other initiation factors, stimulates binding of mRNA and methionyl-tRNAi to the 40S ribosome. The eIF-3 complex specifically targets and initiates translation of a subset of mRNAs involved in cell proliferation. This Lodderomyces elongisporus (strain ATCC 11503 / CBS 2605 / JCM 1781 / NBRC 1676 / NRRL YB-4239) (Yeast) protein is Eukaryotic translation initiation factor 3 subunit I.